Here is a 263-residue protein sequence, read N- to C-terminus: Alpha-tubulin N-acetyltransferase 2 (263 aa).

Positions 1–181 constitute an N-acetyltransferase domain; that stretch reads MEIAFDLSTI…NKYALCSNFF (181 aa). 115 to 128 contributes to the acetyl-CoA binding site; it reads FFVVPTEQRSGNGF. 2 disordered regions span residues 191–223 and 242–263; these read TPRQ…NRPR and EVDP…RRIW. Residues 200 to 212 are compositionally biased toward low complexity; sequence RASSAVSSHASSR. Over residues 253-263 the composition is skewed to basic and acidic residues; the sequence is NARDFGHRRIW.

Belongs to the acetyltransferase ATAT1 family. As to expression, expressed in touch receptor neurons and in a subset of ciliated neurons, including PDE, ADE, CEP, and OLQ neurons.

The catalysed reaction is L-lysyl-[alpha-tubulin] + acetyl-CoA = N(6)-acetyl-L-lysyl-[alpha-tubulin] + CoA + H(+). Its function is as follows. Specifically acetylates 'Lys-40' in alpha-tubulin/mec-12 on the lumenal side of microtubules. Promotes microtubule destabilization and accelerates microtubule dynamics; this activity may be independent of acetylation activity. Acetylates alpha-tubulin with a slow enzymatic rate, due to a catalytic site that is not optimized for acetyl transfer. Enters the microtubule through each end and diffuses quickly throughout the lumen of microtubules. Acetylates only long/old microtubules because of its slow acetylation rate since it does not have time to act on dynamically unstable microtubules before the enzyme is released. Required for the maintenance of touch receptor neurons and possibly other type of neurons involved in locomotion. The chain is Alpha-tubulin N-acetyltransferase 2 (atat-2) from Caenorhabditis elegans.